We begin with the raw amino-acid sequence, 83 residues long: Small ribosomal subunit protein uS17 (83 aa).

It belongs to the universal ribosomal protein uS17 family. Part of the 30S ribosomal subunit.

Functionally, one of the primary rRNA binding proteins, it binds specifically to the 5'-end of 16S ribosomal RNA. The polypeptide is Small ribosomal subunit protein uS17 (Colwellia psychrerythraea (strain 34H / ATCC BAA-681) (Vibrio psychroerythus)).